A 248-amino-acid polypeptide reads, in one-letter code: Ubiquinone/menaquinone biosynthesis C-methyltransferase UbiE (248 aa).

S-adenosyl-L-methionine is bound by residues Ser-68, Asp-92, and 120–121 (NA).

The protein belongs to the class I-like SAM-binding methyltransferase superfamily. MenG/UbiE family.

The catalysed reaction is a 2-demethylmenaquinol + S-adenosyl-L-methionine = a menaquinol + S-adenosyl-L-homocysteine + H(+). It carries out the reaction a 2-methoxy-6-(all-trans-polyprenyl)benzene-1,4-diol + S-adenosyl-L-methionine = a 5-methoxy-2-methyl-3-(all-trans-polyprenyl)benzene-1,4-diol + S-adenosyl-L-homocysteine + H(+). It functions in the pathway quinol/quinone metabolism; menaquinone biosynthesis; menaquinol from 1,4-dihydroxy-2-naphthoate: step 2/2. It participates in cofactor biosynthesis; ubiquinone biosynthesis. Methyltransferase required for the conversion of demethylmenaquinol (DMKH2) to menaquinol (MKH2) and the conversion of 2-polyprenyl-6-methoxy-1,4-benzoquinol (DDMQH2) to 2-polyprenyl-3-methyl-6-methoxy-1,4-benzoquinol (DMQH2). This chain is Ubiquinone/menaquinone biosynthesis C-methyltransferase UbiE, found in Rickettsia typhi (strain ATCC VR-144 / Wilmington).